We begin with the raw amino-acid sequence, 318 residues long: uncharacterized protein (318 aa).

2 helical membrane passes run 230–250 (VWTYLGSIISLLSLAYASFLI) and 264–284 (ASLMVAILFLGGVQLISLGVI).

It belongs to the glycosyltransferase 2 family. GtrB subfamily.

It localises to the cell membrane. This is an uncharacterized protein from Synechocystis sp. (strain ATCC 27184 / PCC 6803 / Kazusa).